A 284-amino-acid polypeptide reads, in one-letter code: D-tagatose-1,6-bisphosphate aldolase subunit GatY (284 aa).

Aspartate 82 acts as the Proton donor in catalysis. Positions 83 and 180 each coordinate Zn(2+). Glycine 181 lines the dihydroxyacetone phosphate pocket. Zn(2+) is bound at residue histidine 208. Residues 209–211 (GAS) and 230–233 (NVAT) each bind dihydroxyacetone phosphate.

Belongs to the class II fructose-bisphosphate aldolase family. TagBP aldolase GatY subfamily. As to quaternary structure, forms a complex with GatZ. It depends on Zn(2+) as a cofactor.

The catalysed reaction is D-tagatofuranose 1,6-bisphosphate = D-glyceraldehyde 3-phosphate + dihydroxyacetone phosphate. It functions in the pathway carbohydrate metabolism; D-tagatose 6-phosphate degradation; D-glyceraldehyde 3-phosphate and glycerone phosphate from D-tagatose 6-phosphate: step 2/2. Catalytic subunit of the tagatose-1,6-bisphosphate aldolase GatYZ, which catalyzes the reversible aldol condensation of dihydroxyacetone phosphate (DHAP or glycerone-phosphate) with glyceraldehyde 3-phosphate (G3P) to produce tagatose 1,6-bisphosphate (TBP). Requires GatZ subunit for full activity and stability. Is involved in the catabolism of galactitol. The protein is D-tagatose-1,6-bisphosphate aldolase subunit GatY of Klebsiella pneumoniae subsp. pneumoniae (strain ATCC 700721 / MGH 78578).